The following is a 1083-amino-acid chain: UPF0182 protein BAD_0641 (1083 aa).

The segment at 1 to 72 (MSFFDMFGPM…TSKPNRPRKP (72 aa)) is disordered. The next 7 membrane-spanning stretches (helical) occupy residues 78 to 98 (IFIGVVLALAIVIGLFFALAQ), 125 to 145 (LWLAYAVLIAAVGFISATLAI), 178 to 198 (IAVVISLIVGLVFGSQFNANW), 239 to 259 (SLLLLAGIIFSIVTHVLMGGI), 281 to 301 (IGIWLMLNMFAWAANQVLGVF), 325 to 345 (VTFIMAAITAILGVILGLWIM), and 372 to 392 (VAIASAIVVSLVLTVAWPVLL). The interval 976 to 1061 (DSGASAGDAE…SDAAMKKGDW (86 aa)) is disordered. 2 stretches are compositionally biased toward basic and acidic residues: residues 991–1013 (TDDKQDAKNDDSADGKTNTDGKQ) and 1050–1060 (KDSDAAMKKGD).

This sequence belongs to the UPF0182 family.

It localises to the cell membrane. This Bifidobacterium adolescentis (strain ATCC 15703 / DSM 20083 / NCTC 11814 / E194a) protein is UPF0182 protein BAD_0641.